We begin with the raw amino-acid sequence, 151 residues long: MIFFMFNMNINSPVRFVKETNRAKSPTRQSPGAAGYDLYSAYDYTIPPGERQLIKTDISMSMPKFCYGRIAPRSGLSLKGIDIGGGVIDEDYRGSIGVILINNGKCTFNVNTGDRIAQLIYQRIYYPELEEVQSLDSTDRGDQGFGSTGLR.

Residue arginine 28 participates in Mg(2+) binding. DUTP is bound by residues 72–74, 86–89, tyrosine 92, glycine 97, isoleucine 99, and arginine 115; these read PRS and GVID.

Belongs to the dUTPase family. Mg(2+) serves as cofactor.

It carries out the reaction dUTP + H2O = dUMP + diphosphate + H(+). In terms of biological role, this enzyme is involved in nucleotide metabolism: it produces dUMP, the immediate precursor of thymidine nucleotides and it decreases the intracellular concentration of dUTP so that uracil cannot be incorporated into DNA. The polypeptide is Deoxyuridine 5'-triphosphate nucleotidohydrolase (OPG046) (Monkeypox virus).